The following is a 475-amino-acid chain: Ribulose bisphosphate carboxylase large chain (475 aa).

The propeptide occupies 1–2 (MS). P3 bears the N-acetylproline mark. An N6,N6,N6-trimethyllysine modification is found at K14. Substrate is bound by residues N123 and T173. Catalysis depends on K175, which acts as the Proton acceptor. K177 lines the substrate pocket. Residues K201, D203, and E204 each contribute to the Mg(2+) site. K201 bears the N6-carboxylysine mark. H294 (proton acceptor) is an active-site residue. Substrate is bound by residues R295, H327, and S379.

The protein belongs to the RuBisCO large chain family. Type I subfamily. As to quaternary structure, heterohexadecamer of 8 large chains and 8 small chains; disulfide-linked. The disulfide link is formed within the large subunit homodimers. Mg(2+) is required as a cofactor. The disulfide bond which can form in the large chain dimeric partners within the hexadecamer appears to be associated with oxidative stress and protein turnover.

The protein resides in the plastid. It localises to the chloroplast. The enzyme catalyses 2 (2R)-3-phosphoglycerate + 2 H(+) = D-ribulose 1,5-bisphosphate + CO2 + H2O. It carries out the reaction D-ribulose 1,5-bisphosphate + O2 = 2-phosphoglycolate + (2R)-3-phosphoglycerate + 2 H(+). Functionally, ruBisCO catalyzes two reactions: the carboxylation of D-ribulose 1,5-bisphosphate, the primary event in carbon dioxide fixation, as well as the oxidative fragmentation of the pentose substrate in the photorespiration process. Both reactions occur simultaneously and in competition at the same active site. The protein is Ribulose bisphosphate carboxylase large chain of Illicium oligandrum (Star anise).